A 218-amino-acid polypeptide reads, in one-letter code: Alkylmercury lyase (218 aa).

Belongs to the MerB family.

The enzyme catalyses an alkylmercury + H(+) = an alkane + Hg(2+). Cleaves the carbon-mercury bond of organomercurials such as phenylmercuric acetate. One product is Hg(2+), which is subsequently detoxified by the mercuric reductase. This is Alkylmercury lyase (merB1) from Bacillus cereus.